The chain runs to 986 residues: Leucine-rich repeat receptor-like kinase protein HAR1 (986 aa).

The N-terminal stretch at 1 to 25 (MRIRVSYLLVLCFTLIWFRWTVVYS) is a signal peptide. 21 LRR repeats span residues 71–97 (DQNL…IGLL), 98–121 (EKLE…LASL), 123–145 (SLKV…ITVG), 146–170 (MTEL…IVKL), 171–196 (EKLK…EFQS), 198–218 (EFLG…LAKL), 243–267 (MENL…LGNL), 268–291 (TKLH…LSSM), 293–314 (SLMS…SFSK), 316–339 (KNLT…IGDL), 340–363 (PNLE…LGGN), 365–387 (RFLY…LCKS), 388–411 (GRLK…IGEC), 412–435 (RSLT…VFQL), 437–458 (SVTI…VISG), 459–482 (ESLG…MKNL), 483–506 (RALQ…VFEI), 508–530 (MLTK…ITHR), 531–554 (ASLT…MKNL), 555–578 (MDLS…IRFM), and 579–603 (TSLT…QFLV). Asn80, Asn102, Asn109, Asn128, and Asn141 each carry an N-linked (GlcNAc...) asparagine glycan. N-linked (GlcNAc...) asparagine glycans are attached at residues Asn255, Asn266, and Asn279. N-linked (GlcNAc...) asparagine glycans are attached at residues Asn317 and Asn351. 2 N-linked (GlcNAc...) asparagine glycosylation sites follow: Asn513 and Asn518. Residues Asn561 and Asn590 are each glycosylated (N-linked (GlcNAc...) asparagine). A helical membrane pass occupies residues 645 to 665 (IVIGIALATAVLLVAVTVHVV). One can recognise a Protein kinase domain in the interval 695–971 (LKEENIIGKG…TMREVVHMLT (277 aa)). Residues 701-709 (IGKGGAGIV) and Lys723 each bind ATP. Catalysis depends on Asp820, which acts as the Proton acceptor.

This sequence belongs to the protein kinase superfamily. Ser/Thr protein kinase family. Expressed in roots, leaves, stems and flowers.

It localises to the cell membrane. The catalysed reaction is L-seryl-[protein] + ATP = O-phospho-L-seryl-[protein] + ADP + H(+). It carries out the reaction L-threonyl-[protein] + ATP = O-phospho-L-threonyl-[protein] + ADP + H(+). In terms of biological role, LRR receptor kinase involved in the regulation of root and shoot growth, and root nodule organogenesis. Involved in long distance nodulation signaling events. Involved in the autoregulation of nodulation (AON), a long distance systemic signaling from root to shoot and back again, which allows legumes to limit the number of root nodules formed based on available nitrogen and previous rhizobial colonization. Acts from shoot to root to control AON. Involved in the regulation of root colonization by arbuscular mycorrhizal (AM) fungi. The protein is Leucine-rich repeat receptor-like kinase protein HAR1 of Lotus japonicus (Lotus corniculatus var. japonicus).